The primary structure comprises 208 residues: Imidazoleglycerol-phosphate dehydratase (208 aa).

The protein belongs to the imidazoleglycerol-phosphate dehydratase family.

The protein resides in the cytoplasm. It catalyses the reaction D-erythro-1-(imidazol-4-yl)glycerol 3-phosphate = 3-(imidazol-4-yl)-2-oxopropyl phosphate + H2O. It participates in amino-acid biosynthesis; L-histidine biosynthesis; L-histidine from 5-phospho-alpha-D-ribose 1-diphosphate: step 6/9. The sequence is that of Imidazoleglycerol-phosphate dehydratase from Arthrobacter sp. (strain FB24).